A 278-amino-acid chain; its full sequence is tRNA pseudouridine synthase A (278 aa).

The active-site Nucleophile is the Asp51. Residue Tyr109 coordinates substrate.

The protein belongs to the tRNA pseudouridine synthase TruA family. In terms of assembly, homodimer.

The catalysed reaction is uridine(38/39/40) in tRNA = pseudouridine(38/39/40) in tRNA. Formation of pseudouridine at positions 38, 39 and 40 in the anticodon stem and loop of transfer RNAs. This is tRNA pseudouridine synthase A from Paracidovorax citrulli (strain AAC00-1) (Acidovorax citrulli).